The following is a 371-amino-acid chain: MRVIITGGGTGGHVYPALAIARGLKEARPGVELLYIGTARGLEADVVPRAGLTLATITVQGLVRRQVWKNIPALVKTGRGLGEAWQQVRRFRPDVVVGTGGYVSGPVCLAAALQGVPVILHEQNAFPGVTNRLLAILARCVCLTFPEAASRFPRRAKLVTTGLPVRPEIIQADRDSCRQHFGLRPEQLFLVTVGGSQGARSINGAMLPILKELAGCQDVSLLQVTGRRDYEAYLQQVRTQGIDLAKYGNITIEPYVYNLEQALAAADLVIGRAGASFLAEVLARGLPSVLVPYPHAAANHQEYNARAVARQGAAVVVLDRELKGGRLYQVVFELLRSREKLKAMAAAAASLGRPGALEAIIQVILKTVESG.

UDP-N-acetyl-alpha-D-glucosamine contacts are provided by residues 10-12, Asn-124, Arg-166, Ser-196, and Gln-301; that span reads TGG.

This sequence belongs to the glycosyltransferase 28 family. MurG subfamily.

Its subcellular location is the cell membrane. The catalysed reaction is di-trans,octa-cis-undecaprenyl diphospho-N-acetyl-alpha-D-muramoyl-L-alanyl-D-glutamyl-meso-2,6-diaminopimeloyl-D-alanyl-D-alanine + UDP-N-acetyl-alpha-D-glucosamine = di-trans,octa-cis-undecaprenyl diphospho-[N-acetyl-alpha-D-glucosaminyl-(1-&gt;4)]-N-acetyl-alpha-D-muramoyl-L-alanyl-D-glutamyl-meso-2,6-diaminopimeloyl-D-alanyl-D-alanine + UDP + H(+). It participates in cell wall biogenesis; peptidoglycan biosynthesis. Functionally, cell wall formation. Catalyzes the transfer of a GlcNAc subunit on undecaprenyl-pyrophosphoryl-MurNAc-pentapeptide (lipid intermediate I) to form undecaprenyl-pyrophosphoryl-MurNAc-(pentapeptide)GlcNAc (lipid intermediate II). The chain is UDP-N-acetylglucosamine--N-acetylmuramyl-(pentapeptide) pyrophosphoryl-undecaprenol N-acetylglucosamine transferase from Moorella thermoacetica (strain ATCC 39073 / JCM 9320).